Consider the following 495-residue polypeptide: DNA double-strand break repair helicase HerA (495 aa).

ATP is bound by residues arginine 141, 150-155, and 458-459; these read GSGKSN and KI.

Belongs to the HerA family. As to quaternary structure, forms a hexamer or a heptamer. Interacts with Mre11.

It catalyses the reaction Couples ATP hydrolysis with the unwinding of duplex DNA at the replication fork by translocating in the 5'-3' direction. This creates two antiparallel DNA single strands (ssDNA). The leading ssDNA polymer is the template for DNA polymerase III holoenzyme which synthesizes a continuous strand.. The catalysed reaction is ATP + H2O = ADP + phosphate + H(+). It carries out the reaction Couples ATP hydrolysis with the unwinding of duplex DNA by translocating in the 3'-5' direction.. Its activity is regulated as follows. ATPase activity is slightly stimulated by either circular single- or double-stranded (ds)DNA with a weak preference for dsDNA. Helicase activity is stimulated by Mre11. Functionally, involved in DNA double-strand break (DSB) repair. Probably acts with NurA to stimulate resection of the 5' strand and produce the long 3' single-strand that is required for RadA loading. Has DNA-dependent ATPase activity and bidirectional DNA helicase activity. Loads on either a 3' or a 5' DNA tail for subsequent DNA unwinding. Can also unwind blunt-ended dsDNA, Holliday junction and splayed-arm DNA. In Sulfurisphaera tokodaii (strain DSM 16993 / JCM 10545 / NBRC 100140 / 7) (Sulfolobus tokodaii), this protein is DNA double-strand break repair helicase HerA.